The primary structure comprises 236 residues: Protein YIPF6 (236 aa).

Ala2 is modified (N-acetylalanine). Residues 2-84 (AEAEDSPGEQ…HVLYPRKSNA (83 aa)) lie on the Cytoplasmic side of the membrane. Position 7 is a phosphoserine (Ser7). Residues 85–105 (LLRDWDLWGPLILCVTLALML) traverse the membrane as a helical segment. Residues 106–116 (QKSSIDGKNDG) lie on the Lumenal side of the membrane. A helical transmembrane segment spans residues 117-137 (GGPEFAEVFVIIWFGAVTITL). The Cytoplasmic portion of the chain corresponds to 138–147 (NSKLLGGNIS). Residues 148 to 168 (FFQSLCVLGYCILPLNIAMLI) form a helical membrane-spanning segment. The Lumenal portion of the chain corresponds to 169 to 185 (CRLLLLAGQGPINFMIR). The helical transmembrane segment at 186–206 (LFVVLLMFAWSVVASTAFLAD) threads the bilayer. Topologically, residues 207–213 (SQPPNRK) are cytoplasmic. The chain crosses the membrane as a helical span at residues 214–234 (ALAVYPVFLFYFVISWMILTF). Topologically, residues 235 to 236 (TP) are lumenal.

Belongs to the YIP1 family. In terms of assembly, predominantly interacts with YIPF1 or YIPF2, but may also form a ternary complex with YIPF1 and YIPF2. This interaction may stabilize YIPF1 and YIPF2.

It localises to the golgi apparatus membrane. Functionally, may be required for stable YIPF1 and YIPF2 protein expression. The polypeptide is Protein YIPF6 (Yipf6) (Mus musculus (Mouse)).